Consider the following 97-residue polypeptide: Coiled-coil domain-containing protein 167 (97 aa).

Positions 2 to 78 (TKKKRENLGV…LLRHENRKNT (77 aa)) form a coiled coil. Residues 78 to 95 (TLLSVAIFTVFALLYAYW) traverse the membrane as a helical segment.

The protein resides in the membrane. This chain is Coiled-coil domain-containing protein 167 (Ccdc167), found in Mus musculus (Mouse).